The sequence spans 352 residues: Alpha-2-HS-glycoprotein (352 aa).

A signal peptide spans 1–18 (MKSLVLLLCFAQLWSCQS). Positions 19–133 (APQGAGLGFR…QFRVLHAQCH (115 aa)) constitute a Cystatin fetuin-A-type 1 domain. 6 cysteine pairs are disulfide-bonded: C32–C343, C89–C100, C114–C132, C146–C149, C208–C219, and C230–C247. N99 is a glycosylation site (N-linked (GlcNAc...) asparagine). S134 carries the post-translational modification Phosphoserine. T135 bears the Phosphothreonine mark. S138 is subject to Phosphoserine. Residues 144–250 (KFCPRCPILI…EEVSVACKLF (107 aa)) form the Cystatin fetuin-A-type 2 domain. N156 and N176 each carry an N-linked (GlcNAc...) asparagine glycan. Low complexity predominate over residues 256–273 (PANANPAGPAPTVGQAAP). The disordered stretch occupies residues 256 to 280 (PANANPAGPAPTVGQAAPVAPPAGP). S309, S313, S316, and S318 each carry phosphoserine. The interval 319–338 (GEVLHSPKVGQPGDAGAAGP) is disordered. Over residues 328-338 (GQPGDAGAAGP) the composition is skewed to low complexity.

It belongs to the fetuin family. Undergoes complex post-translational modification involving N-glycosylation, and addition of fucose and sialic acid residues. Phosphorylation occurs at a serine residue. In terms of processing, phosphorylated by FAM20C in the extracellular medium. Synthesized in liver and secreted by the hepatocytes in the blood.

The protein resides in the secreted. Could inhibit both insulin-receptor tyrosine kinase activity and insulin-stimulated receptor autophosphorylation and, concomitantly, antagonize the mitogenic effect of the hormone in cultured rat hepatoma cells. The sequence is that of Alpha-2-HS-glycoprotein (Ahsg) from Rattus norvegicus (Rat).